Here is a 603-residue protein sequence, read N- to C-terminus: MPNRAFKQSNIRNFSIIAHIDHGKSTLSDRLIQHCGGLTDREMAEQVLDSMDLERERGITIKAQSVTLYYTAKDGETYQLNFIDTPGHVDFSYEVSRSLAGCEGALLVVDAAQGVEAQTLANCYTAIEMDLEVVPVLNKIDLPQADAMGVAQEIEDIVGIEAVDAVQCSAKTGLGIDDVLERIVRQIPPPKGEPEEPLQALIIDSWFDNYQGVVSLVRVRNGTLRAGEKMTVMSTGQSYQIDKVGYFDPKPHETGILHTGEVGYVISGIKDILGAPVGDTLTNTKSPAKEPVPGFKKVKPQVYAGMFPISSEDYESFRDALGKLSLNDASLFYEPENSAALGFGFRCGFLGMLHMEIIQERLEREYDIDLITTAPTVVYEVEKTDGSIVKVDNPVNLPAVNDIETIYEPIVEANILVPQEFLGNVITLCVDKRGVQTAMAYHGKQVAVTYELPMAEVVMDFFDRLKSTSRGYASLDYQFKKFEPADMVRVDILINGDRVDALAMITHRDHAEGRGRMLVDKMRELIPRQMFDIAIQATIGNHVIARSTVKQLRKNVTAKCYGGDISRKKKLLQKQKEGKKRMKNLGNVEVPQEAFLAVLKVGK.

Residues 9-191 enclose the tr-type G domain; the sequence is SNIRNFSIIA…RIVRQIPPPK (183 aa). GTP contacts are provided by residues 21–26 and 138–141; these read DHGKST and NKID.

This sequence belongs to the TRAFAC class translation factor GTPase superfamily. Classic translation factor GTPase family. LepA subfamily.

It localises to the cell inner membrane. It carries out the reaction GTP + H2O = GDP + phosphate + H(+). Functionally, required for accurate and efficient protein synthesis under certain stress conditions. May act as a fidelity factor of the translation reaction, by catalyzing a one-codon backward translocation of tRNAs on improperly translocated ribosomes. Back-translocation proceeds from a post-translocation (POST) complex to a pre-translocation (PRE) complex, thus giving elongation factor G a second chance to translocate the tRNAs correctly. Binds to ribosomes in a GTP-dependent manner. The polypeptide is Elongation factor 4 (Idiomarina loihiensis (strain ATCC BAA-735 / DSM 15497 / L2-TR)).